A 424-amino-acid chain; its full sequence is Dihydroorotase (424 aa).

Residues His58 and His60 each contribute to the Zn(2+) site. Substrate is bound by residues 60–62 (HLR), Asn92, and Asn276. Asp303 contacts Zn(2+). Residue Asp303 is part of the active site. Residues His307 and 321–322 (FG) each bind substrate.

The protein belongs to the metallo-dependent hydrolases superfamily. DHOase family. Class I DHOase subfamily. The cofactor is Zn(2+).

The catalysed reaction is (S)-dihydroorotate + H2O = N-carbamoyl-L-aspartate + H(+). The protein operates within pyrimidine metabolism; UMP biosynthesis via de novo pathway; (S)-dihydroorotate from bicarbonate: step 3/3. Its function is as follows. Catalyzes the reversible cyclization of carbamoyl aspartate to dihydroorotate. The protein is Dihydroorotase of Staphylococcus aureus (strain COL).